Reading from the N-terminus, the 407-residue chain is uncharacterized protein (407 aa).

Topologically, residues 1–290 (MPLNIIGTAL…SNSLRRVISN (290 aa)) are lumenal. Residues Asp-114, Lys-236, and Ser-281 each contribute to the NADP(+) site. Lys-236 acts as the Lowers pKa of active site Tyr in catalysis. The chain crosses the membrane as a helical span at residues 291 to 311 (GSVVLLIILYCILLYPILWLF). The Cytoplasmic portion of the chain corresponds to 312–407 (TKSGRRGDQS…KSQNKSRKDD (96 aa)). A coiled-coil region spans residues 361–390 (ELQKKLFDNTERDILQLEKKVAAKRNANKT). The tract at residues 383–407 (AKRNANKTGNQNSKKKSQNKSRKDD) is disordered. Over residues 395–407 (SKKKSQNKSRKDD) the composition is skewed to basic residues.

This sequence belongs to the short-chain dehydrogenases/reductases (SDR) family.

It localises to the endoplasmic reticulum membrane. In terms of biological role, may be involved in lipid metabolism. This is an uncharacterized protein from Saccharomyces cerevisiae (strain ATCC 204508 / S288c) (Baker's yeast).